A 202-amino-acid polypeptide reads, in one-letter code: CASP-like protein 2U7 (202 aa).

Topologically, residues 1 to 10 (MLELYEKRRA) are cytoplasmic. The helical transmembrane segment at 11–31 (LLLLRLAAMFLSLAALLITVL) threads the bilayer. At 32–64 (NREDGFFSINVFGSPQPILTKATADFTLVKGLK) the chain is on the extracellular side. A helical transmembrane segment spans residues 65–85 (FFAGAMGIVAGYSFLQLAIAM). Residues 86-101 (ASMFSGAPSILGGKRM) are Cytoplasmic-facing. A helical membrane pass occupies residues 102 to 122 (AWLCFVGDMTASHLCAAAAAV). The Extracellular segment spans residues 123 to 148 (SAQLAYLGKRGAPMWSAVCTYFSHYC). Residues 149–169 (LVFGLAVIFAFLATLAALLVA) form a helical membrane-spanning segment. Residues 170-202 (SISSYHLFRLHGILQQQQQQRRQLQQEHVQDKP) lie on the Cytoplasmic side of the membrane.

It belongs to the Casparian strip membrane proteins (CASP) family. In terms of assembly, homodimer and heterodimers.

It localises to the cell membrane. The protein is CASP-like protein 2U7 of Selaginella moellendorffii (Spikemoss).